The following is a 473-amino-acid chain: H(+)/Cl(-) exchange transporter ClcA (473 aa).

At 1 to 32 the chain is on the cytoplasmic side; it reads MKTDTSTFLAQQIVRLRRRDQIRRLMQRDKTP. The chain crosses the membrane as a helical span at residues 33 to 69; that stretch reads LAILFMAAVVGTLTGLVGVAFEKTVSWVQNMRIGALV. Residues 70–76 are Periplasmic-facing; that stretch reads QVADHAF. The helical transmembrane segment at 77–100 threads the bilayer; that stretch reads LLWPLAFILSALLAMVGYFLVRKF. A Selectivity filter part_1 motif is present at residues 106-110; that stretch reads GSGIP. Ser107 serves as a coordination point for chloride. An intramembrane region (helical) is located at residues 109-116; the sequence is IPEIEGAL. Over 117-123 the chain is Cytoplasmic; sequence EELRPVR. The next 2 helical transmembrane spans lie at 124–141 and 148–166; these read WWRVLPVKFIGGMGTLGA and EGPTVQIGGNLGRMVLDVF. A Selectivity filter part_2 motif is present at residues 146 to 150; sequence GREGP. The Cytoplasmic portion of the chain corresponds to 167–176; the sequence is RMRSAEARHT. 2 consecutive intramembrane regions (helical) follow at residues 177–189 and 193–201; these read LLATGAAAGLSAA and PLAGILFII. The Cytoplasmic portion of the chain corresponds to 202-214; the sequence is EEMRPQFRYNLIS. The chain crosses the membrane as a helical span at residues 215–232; that stretch reads IKAVFTGVIMSSIVFRIF. At 233-252 the chain is on the periplasmic side; that stretch reads NGEAPIIEVGKLSDAPVNTL. The chain crosses the membrane as a helical span at residues 253–281; that stretch reads WLYLILGIIFGCVGPVFNSLVLRTQDMFQ. The Cytoplasmic segment spans residues 282 to 287; that stretch reads RFHGGE. Residues 288–309 traverse the membrane as a helical segment; that stretch reads IKKWVLMGGAIGGLCGILGLIE. Residues 310 to 329 are Periplasmic-facing; sequence PAAAGGGFNLIPIAAAGNFS. 2 helical membrane passes run 330 to 349 and 355 to 376; these read VGLLLFIFITRVVTTLLCFS and GIFAPMLALGTLLGTAFGMAAA. The short motif at 355–359 is the Selectivity filter part_3 element; the sequence is GIFAP. Ile356 and Phe357 together coordinate chloride. Residues 377-386 lie on the Periplasmic side of the membrane; the sequence is VLFPQYHPEA. Positions 387–401 form an intramembrane region, helical; it reads GTFAIAGMGALMAAS. Residues 402-404 constitute an intramembrane region (note=Loop between two helices); the sequence is VRA. An intramembrane region (helical) is located at residues 405-416; the sequence is PLTGIVLVLEMT. The segment at residues 417–421 is an intramembrane region (note=Loop between two helices); sequence DNYQL. Residues 422-438 traverse the membrane as a helical segment; sequence ILPMIITCLGATLLAQF. Residues 439-473 lie on the Cytoplasmic side of the membrane; that stretch reads LGGKPLYSTILARTLAKQDAEQAAKNQNAPAGENT. Residue Tyr445 participates in chloride binding.

It belongs to the chloride channel (TC 2.A.49) family. ClcA subfamily. As to quaternary structure, homodimer.

The protein localises to the cell inner membrane. The catalysed reaction is 2 chloride(in) + H(+)(out) = 2 chloride(out) + H(+)(in). Functionally, proton-coupled chloride transporter. Functions as antiport system and exchanges two chloride ions for 1 proton. Probably acts as an electrical shunt for an outwardly-directed proton pump that is linked to amino acid decarboxylation, as part of the extreme acid resistance (XAR) response. In Salmonella paratyphi A (strain AKU_12601), this protein is H(+)/Cl(-) exchange transporter ClcA.